Reading from the N-terminus, the 153-residue chain is MGKSILLINGPNLNLLGTREPHIYGSTTLADVEASSKAHAASLGATLETYQSNHEGAIVDRIQAARGNVDGIVINPGAYTHTSVAIRDALVGVDIPFIELHVSNVHAREPWRHHSYFSDKAAGIIVGLGVYGYKVAVEHVAVNFKSREEKAAL.

Y24 (proton acceptor) is an active-site residue. N75, H81, and D88 together coordinate substrate. The active-site Proton donor is the H101. Substrate is bound by residues 102 to 103 (VS) and R112.

It belongs to the type-II 3-dehydroquinase family. As to quaternary structure, homododecamer. Adopts a ring-like structure, composed of an arrangement of two hexameric rings stacked on top of one another.

The enzyme catalyses 3-dehydroquinate = 3-dehydroshikimate + H2O. Its pathway is aromatic compound metabolism; 3,4-dihydroxybenzoate biosynthesis; 3,4-dihydroxybenzoate from 3-dehydroquinate: step 1/2. Is involved in the catabolism of quinate. Allows the utilization of quinate as carbon source via the beta-ketoadipate pathway. The chain is Catabolic 3-dehydroquinase from Aspergillus oryzae (strain ATCC 42149 / RIB 40) (Yellow koji mold).